Consider the following 256-residue polypeptide: Imidazole glycerol phosphate synthase subunit HisF (256 aa).

Residues D11 and D130 contribute to the active site.

It belongs to the HisA/HisF family. As to quaternary structure, heterodimer of HisH and HisF.

The protein localises to the cytoplasm. It carries out the reaction 5-[(5-phospho-1-deoxy-D-ribulos-1-ylimino)methylamino]-1-(5-phospho-beta-D-ribosyl)imidazole-4-carboxamide + L-glutamine = D-erythro-1-(imidazol-4-yl)glycerol 3-phosphate + 5-amino-1-(5-phospho-beta-D-ribosyl)imidazole-4-carboxamide + L-glutamate + H(+). Its pathway is amino-acid biosynthesis; L-histidine biosynthesis; L-histidine from 5-phospho-alpha-D-ribose 1-diphosphate: step 5/9. In terms of biological role, IGPS catalyzes the conversion of PRFAR and glutamine to IGP, AICAR and glutamate. The HisF subunit catalyzes the cyclization activity that produces IGP and AICAR from PRFAR using the ammonia provided by the HisH subunit. This Cupriavidus metallidurans (strain ATCC 43123 / DSM 2839 / NBRC 102507 / CH34) (Ralstonia metallidurans) protein is Imidazole glycerol phosphate synthase subunit HisF.